A 369-amino-acid chain; its full sequence is UPF0754 membrane protein Aflv_2299 (369 aa).

The next 2 helical transmembrane spans lie at 1–21 and 347–367; these read MGLF…GGMT and YLGA…TFFV.

This sequence belongs to the UPF0754 family.

It localises to the cell membrane. This is UPF0754 membrane protein Aflv_2299 from Anoxybacillus flavithermus (strain DSM 21510 / WK1).